Consider the following 433-residue polypeptide: Pyrimidine-nucleoside phosphorylase (433 aa).

81 to 83 (KHS) serves as a coordination point for phosphate. 2 residues coordinate K(+): Gly88 and Thr90. Residues Thr92, 108–110 (KMS), and Thr120 each bind phosphate. Substrate-binding residues include Arg168 and Lys187. K(+)-binding residues include Leu243, Ala246, and Glu255.

Belongs to the thymidine/pyrimidine-nucleoside phosphorylase family. In terms of assembly, homodimer. Requires K(+) as cofactor.

The enzyme catalyses uridine + phosphate = alpha-D-ribose 1-phosphate + uracil. The catalysed reaction is thymidine + phosphate = 2-deoxy-alpha-D-ribose 1-phosphate + thymine. It catalyses the reaction 2'-deoxyuridine + phosphate = 2-deoxy-alpha-D-ribose 1-phosphate + uracil. Catalyzes phosphorolysis of the pyrimidine nucleosides uridine, thymidine and 2'-deoxyuridine with the formation of the corresponding pyrimidine base and ribose-1-phosphate. This Staphylococcus haemolyticus (strain JCSC1435) protein is Pyrimidine-nucleoside phosphorylase (pdp).